The sequence spans 511 residues: Ribose import ATP-binding protein RbsA (511 aa).

ABC transporter domains lie at L7–E242 and C256–Q500. G39–S46 provides a ligand contact to ATP.

Belongs to the ABC transporter superfamily. Ribose importer (TC 3.A.1.2.1) family. As to quaternary structure, the complex is composed of an ATP-binding protein (RbsA), two transmembrane proteins (RbsC) and a solute-binding protein (RbsB).

The protein resides in the cell inner membrane. It catalyses the reaction D-ribose(out) + ATP + H2O = D-ribose(in) + ADP + phosphate + H(+). In terms of biological role, part of the ABC transporter complex RbsABC involved in ribose import. Responsible for energy coupling to the transport system. In Ruegeria sp. (strain TM1040) (Silicibacter sp.), this protein is Ribose import ATP-binding protein RbsA.